Consider the following 87-residue polypeptide: Retinal rod rhodopsin-sensitive cGMP 3',5'-cyclic phosphodiesterase subunit gamma (87 aa).

Met-1 carries the post-translational modification N-acetylmethionine. Residues 1-12 (MNLEPPKAEIRS) show a composition bias toward basic and acidic residues. Residues 1–55 (MNLEPPKAEIRSATRVMGGPVTPRKGPPKFKQRQTRQFKSKPPKKGVQGFGDDIP) form a disordered region. A compositionally biased stretch (basic residues) spans 26–44 (GPPKFKQRQTRQFKSKPPK).

This sequence belongs to the rod/cone cGMP-PDE gamma subunit family. In terms of assembly, oligomer composed of two catalytic chains (alpha and beta), an inhibitory chain (gamma) and the delta chain.

The catalysed reaction is 3',5'-cyclic GMP + H2O = GMP + H(+). In terms of biological role, participates in processes of transmission and amplification of the visual signal. cGMP-PDEs are the effector molecules in G-protein-mediated phototransduction in vertebrate rods and cones. This Bos taurus (Bovine) protein is Retinal rod rhodopsin-sensitive cGMP 3',5'-cyclic phosphodiesterase subunit gamma (PDE6G).